We begin with the raw amino-acid sequence, 151 residues long: Nucleoside diphosphate kinase (151 aa).

Residues lysine 11, phenylalanine 59, arginine 87, threonine 93, arginine 104, and asparagine 114 each coordinate ATP. Histidine 117 (pros-phosphohistidine intermediate) is an active-site residue.

Belongs to the NDK family. Homotetramer. Mg(2+) serves as cofactor.

The protein localises to the cytoplasm. The catalysed reaction is a 2'-deoxyribonucleoside 5'-diphosphate + ATP = a 2'-deoxyribonucleoside 5'-triphosphate + ADP. It catalyses the reaction a ribonucleoside 5'-diphosphate + ATP = a ribonucleoside 5'-triphosphate + ADP. Its function is as follows. Major role in the synthesis of nucleoside triphosphates other than ATP. The ATP gamma phosphate is transferred to the NDP beta phosphate via a ping-pong mechanism, using a phosphorylated active-site intermediate. The polypeptide is Nucleoside diphosphate kinase (Prochlorococcus marinus (strain MIT 9211)).